The following is a 132-amino-acid chain: uncharacterized protein (132 aa).

A run of 2 helical transmembrane segments spans residues 12–32 (VIGFVVLFCVLELVFYLKKLY) and 37–57 (LTLAVFGIFSLLFFLLYIPVL).

Its subcellular location is the cell membrane. This is an uncharacterized protein from Methanocaldococcus jannaschii (strain ATCC 43067 / DSM 2661 / JAL-1 / JCM 10045 / NBRC 100440) (Methanococcus jannaschii).